A 1405-amino-acid chain; its full sequence is DNA-directed RNA polymerase subunit beta' (1405 aa).

Zn(2+) is bound by residues C70, C72, C85, and C88. Mg(2+) contacts are provided by D460, D462, and D464. Zn(2+)-binding residues include C814, C888, C895, and C898.

The protein belongs to the RNA polymerase beta' chain family. As to quaternary structure, the RNAP catalytic core consists of 2 alpha, 1 beta, 1 beta' and 1 omega subunit. When a sigma factor is associated with the core the holoenzyme is formed, which can initiate transcription. Mg(2+) serves as cofactor. The cofactor is Zn(2+).

The enzyme catalyses RNA(n) + a ribonucleoside 5'-triphosphate = RNA(n+1) + diphosphate. In terms of biological role, DNA-dependent RNA polymerase catalyzes the transcription of DNA into RNA using the four ribonucleoside triphosphates as substrates. This is DNA-directed RNA polymerase subunit beta' from Wigglesworthia glossinidia brevipalpis.